Reading from the N-terminus, the 156-residue chain is MSRRGNIKRRPVPPDPVYNSRLISMTIRRVMKSGKKSVAAGIMYDALTSIGEKTGSDPLEVFEKAIKNLTPLVEVKARRVGGATYQVPMEVRSSRGTTLALRWLVHYARIRGGRTMSSKLANEIMDAANETGGAMKKRDETHRMAEANKAFAHYRY.

The protein belongs to the universal ribosomal protein uS7 family. Part of the 30S ribosomal subunit. Contacts proteins S9 and S11.

In terms of biological role, one of the primary rRNA binding proteins, it binds directly to 16S rRNA where it nucleates assembly of the head domain of the 30S subunit. Is located at the subunit interface close to the decoding center, probably blocks exit of the E-site tRNA. The sequence is that of Small ribosomal subunit protein uS7 from Rippkaea orientalis (strain PCC 8801 / RF-1) (Cyanothece sp. (strain PCC 8801)).